Consider the following 151-residue polypeptide: Ribosome maturation factor RimP (151 aa).

It belongs to the RimP family.

The protein localises to the cytoplasm. Functionally, required for maturation of 30S ribosomal subunits. This is Ribosome maturation factor RimP from Shewanella sp. (strain MR-4).